We begin with the raw amino-acid sequence, 328 residues long: MFNFRLFSRRGKSLGLLAIVLLLFGFYSLKSSMPVYSNSIGSPSAHSSSYKGVSKAKTSPQDPDSVVMLIVSFDDHYDSSRSDSSSVFLDKVLSDRTEYALRHGYTLVHKKARDIQARYGVYGTWSIIPALRETLAEYPDAGWIWLLDAKAVIMNPSESLKDRVLKPEKLSQHLLLNSPIDPLKNYIRTRRKMDPSDVFVITTSDYNGISTRSLLIKNNNFAPFLLDAWNEPLLKSAGFDQAERSALSHLLEAHNTILDHVALVSPKVLNSYTNSAVDLNYEEGDFLVILQDCENAAACERIFDNYYQQRKLPAIKKQLSEETVDEQS.

Positions 1 to 32 (MFNFRLFSRRGKSLGLLAIVLLLFGFYSLKSS) are cleaved as a signal peptide.

It belongs to the glycosyltransferase 34 family.

Its subcellular location is the endoplasmic reticulum. This is an uncharacterized protein from Schizosaccharomyces pombe (strain 972 / ATCC 24843) (Fission yeast).